Here is a 115-residue protein sequence, read N- to C-terminus: DNA-binding protein Ta0052 (115 aa).

The disordered stretch occupies residues 1–41; it reads MDDDEELERIRRQQLESMQRQAMQEQMREEQEKQREAERAR. Positions 15-25 are enriched in low complexity; the sequence is LESMQRQAMQE. Residues 26 to 41 are compositionally biased toward basic and acidic residues; that stretch reads QMREEQEKQREAERAR.

This sequence belongs to the PDCD5 family.

This is DNA-binding protein Ta0052 from Thermoplasma acidophilum (strain ATCC 25905 / DSM 1728 / JCM 9062 / NBRC 15155 / AMRC-C165).